A 372-amino-acid chain; its full sequence is Flagellar P-ring protein (372 aa).

The signal sequence occupies residues 1 to 26; it reads MNLSSLPFRLLAAAVALCAIAAPASA.

Belongs to the FlgI family. In terms of assembly, the basal body constitutes a major portion of the flagellar organelle and consists of four rings (L,P,S, and M) mounted on a central rod.

The protein localises to the periplasm. It is found in the bacterial flagellum basal body. Its function is as follows. Assembles around the rod to form the L-ring and probably protects the motor/basal body from shearing forces during rotation. This Xanthomonas campestris pv. campestris (strain B100) protein is Flagellar P-ring protein.